A 111-amino-acid polypeptide reads, in one-letter code: Ribonuclease P protein component (111 aa).

This sequence belongs to the RnpA family. As to quaternary structure, consists of a catalytic RNA component (M1 or rnpB) and a protein subunit.

The enzyme catalyses Endonucleolytic cleavage of RNA, removing 5'-extranucleotides from tRNA precursor.. Functionally, RNaseP catalyzes the removal of the 5'-leader sequence from pre-tRNA to produce the mature 5'-terminus. It can also cleave other RNA substrates such as 4.5S RNA. The protein component plays an auxiliary but essential role in vivo by binding to the 5'-leader sequence and broadening the substrate specificity of the ribozyme. This Streptococcus thermophilus (strain ATCC BAA-491 / LMD-9) protein is Ribonuclease P protein component.